An 84-amino-acid chain; its full sequence is U4-theraphotoxin-Hhn1a (84 aa).

Positions 1–22 (MKVTLIAILTRAAVLVLHTTAA) are cleaved as a signal peptide. Residues 23-47 (EELEESQLMEVSMPDTELAAVDEER) constitute a propeptide that is removed on maturation. Disulfide bonds link C51–C65, C55–C76, and C70–C81.

This sequence belongs to the neurotoxin 12 (Hwtx-2) family. 02 (Hwtx-2) subfamily. In terms of tissue distribution, expressed by the venom gland.

It is found in the secreted. Its function is as follows. Postsynaptic neurotoxin. This is U4-theraphotoxin-Hhn1a from Cyriopagopus hainanus (Chinese bird spider).